Here is a 392-residue protein sequence, read N- to C-terminus: Alanine racemase 2 (392 aa).

K40 (proton acceptor; specific for D-alanine) is an active-site residue. K40 is subject to N6-(pyridoxal phosphate)lysine. R138 contributes to the substrate binding site. Catalysis depends on Y266, which acts as the Proton acceptor; specific for L-alanine. Substrate is bound at residue M314.

Belongs to the alanine racemase family. Pyridoxal 5'-phosphate is required as a cofactor.

It carries out the reaction L-alanine = D-alanine. It functions in the pathway amino-acid biosynthesis; D-alanine biosynthesis; D-alanine from L-alanine: step 1/1. Functionally, catalyzes the interconversion of L-alanine and D-alanine. May also act on other amino acids. This Oceanobacillus iheyensis (strain DSM 14371 / CIP 107618 / JCM 11309 / KCTC 3954 / HTE831) protein is Alanine racemase 2 (alr2).